The sequence spans 341 residues: Heterogeneous nuclear ribonucleoproteins A2/B1 (341 aa).

RRM domains follow at residues 9–92 (RKLF…ESGK) and 100–179 (KKLF…LSRQ). K10 participates in a covalent cross-link: Glycyl lysine isopeptide (Lys-Gly) (interchain with G-Cter in SUMO2). S17 is modified (phosphoserine). Position 26 is an omega-N-methylarginine (R26). Phosphoserine is present on S73. Position 92 is an N6,N6-dimethyllysine; alternate (K92). K92 is covalently cross-linked (Glycyl lysine isopeptide (Lys-Gly) (interchain with G-Cter in SUMO2); alternate). Glycyl lysine isopeptide (Lys-Gly) (interchain with G-Cter in SUMO2) cross-links involve residues K100, K108, and K125. A Phosphothreonine modification is found at T128. Residue S137 is modified to Phosphoserine. K140 participates in a covalent cross-link: Glycyl lysine isopeptide (Lys-Gly) (interchain with G-Cter in SUMO2). T147 is subject to Phosphothreonine. Residues K156 and K161 each participate in a glycyl lysine isopeptide (Lys-Gly) (interchain with G-Cter in SUMO2); alternate cross-link. N6-acetyllysine; alternate occurs at positions 156 and 161. Phosphothreonine is present on T164. A Glycyl lysine isopeptide (Lys-Gly) (interchain with G-Cter in SUMO2) cross-link involves residue K174. S177 and S189 each carry phosphoserine. Residues 181 to 341 (MQEVQSSRSG…SGGYGGRSRY (161 aa)) form a disordered region. Over residues 190–211 (GRGGNFGFGDSRGGGGNFGPGP) the composition is skewed to gly residues. R191 is modified (asymmetric dimethylarginine; alternate). Residue R191 is modified to Dimethylated arginine; alternate. R191 is subject to Omega-N-methylarginine; alternate. S200 is subject to Phosphoserine. R201 is subject to Asymmetric dimethylarginine; alternate. Residue R201 is modified to Dimethylated arginine; alternate. R201 carries the omega-N-methylarginine; alternate modification. S213 is modified (phosphoserine). R216 is subject to Omega-N-methylarginine. Residues S219 and S224 each carry the phosphoserine modification. Omega-N-methylarginine is present on R226. S247 bears the Phosphoserine mark. R254 carries the asymmetric dimethylarginine; alternate modification. Position 254 is an omega-N-methylarginine; alternate (R254). Residues 296–335 (QQPSNYGPMKSGNFGGSRNMGGPYGGGNYGPGGSGGSGGY) are nuclear targeting sequence. The segment covering 308 to 341 (NFGGSRNMGGPYGGGNYGPGGSGGSGGYGGRSRY) has biased composition (gly residues). Position 312 is a phosphoserine (S312). R313 carries the post-translational modification Omega-N-methylarginine. Phosphotyrosine is present on Y319. 2 positions are modified to phosphoserine: S329 and S332. The residue at position 335 (Y335) is a Phosphotyrosine. The residue at position 338 (R338) is an Omega-N-methylarginine.

Identified in the spliceosome C complex. Identified in a IGF2BP1-dependent mRNP granule complex containing untranslated mRNAs. Interacts with IGF2BP1. Interacts with C9orf72. Interacts with DGCR8. Interacts with TARDBP. Interacts with CKAP5. Interacts with PPIA/CYPA. Interacts (via C-terminus) with FAM76B; the interaction results in retention of HNRNPA2B1 in the nucleus and inhibition of the NF-kappa-B-mediated inflammatory pathway. Interacts with NF-kappa-B inhibitors NFKBIA and NFKBIE; the interaction may be mediated by the RRM2 domain of HNRNPA2B1, and HNRNPA2B1 may interact simultaneously with FAM76B and either NFKBIA or NFKBIE to form a complex. In terms of processing, sumoylated in exosomes, promoting miRNAs-binding. Asymmetric dimethylation at Arg-254 constitutes the major methylation site. According to a report, methylation affects subcellular location and promotes nuclear localization. According to another report, methylation at Arg-254 does not influence nucleocytoplasmic shuttling.

It localises to the nucleus. The protein localises to the nucleoplasm. The protein resides in the cytoplasmic granule. Its subcellular location is the secreted. It is found in the extracellular exosome. In terms of biological role, heterogeneous nuclear ribonucleoprotein (hnRNP) that associates with nascent pre-mRNAs, packaging them into hnRNP particles. The hnRNP particle arrangement on nascent hnRNA is non-random and sequence-dependent and serves to condense and stabilize the transcripts and minimize tangling and knotting. Packaging plays a role in various processes such as transcription, pre-mRNA processing, RNA nuclear export, subcellular location, mRNA translation and stability of mature mRNAs. Forms hnRNP particles with at least 20 other different hnRNP and heterogeneous nuclear RNA in the nucleus. Involved in transport of specific mRNAs to the cytoplasm in oligodendrocytes and neurons: acts by specifically recognizing and binding the A2RE (21 nucleotide hnRNP A2 response element) or the A2RE11 (derivative 11 nucleotide oligonucleotide) sequence motifs present on some mRNAs, and promotes their transport to the cytoplasm. Specifically binds single-stranded telomeric DNA sequences, protecting telomeric DNA repeat against endonuclease digestion. Also binds other RNA molecules, such as primary miRNA (pri-miRNAs): acts as a nuclear 'reader' of the N6-methyladenosine (m6A) mark by specifically recognizing and binding a subset of nuclear m6A-containing pri-miRNAs. Binding to m6A-containing pri-miRNAs promotes pri-miRNA processing by enhancing binding of DGCR8 to pri-miRNA transcripts. Involved in miRNA sorting into exosomes following sumoylation, possibly by binding (m6A)-containing pre-miRNAs. Acts as a regulator of efficiency of mRNA splicing, possibly by binding to m6A-containing pre-mRNAs. Plays a role in the splicing of pyruvate kinase PKM by binding repressively to sequences flanking PKM exon 9, inhibiting exon 9 inclusion and resulting in exon 10 inclusion and production of the PKM M2 isoform. The chain is Heterogeneous nuclear ribonucleoproteins A2/B1 (HNRNPA2B1) from Saguinus oedipus (Cotton-top tamarin).